We begin with the raw amino-acid sequence, 37 residues long: Large ribosomal subunit protein bL36 (37 aa).

Belongs to the bacterial ribosomal protein bL36 family.

This Parasynechococcus marenigrum (strain WH8102) protein is Large ribosomal subunit protein bL36.